Consider the following 473-residue polypeptide: B box and SPRY domain-containing protein (473 aa).

Residues 1–69 (MSADVSGTES…PKQGSERSQL (69 aa)) are disordered. The span at 35–51 (KPGPGPEPRPESGPEPG) shows a compositional bias: pro residues. The B box-type zinc finger occupies 65–113 (ERSQLCPEHFEPLSWFCLSERRPVCATCAGFGGRCHRHRIRRAEEHAEE). One can recognise a B30.2/SPRY domain in the interval 259–455 (SPLLTQLWAA…ISIVRGPLAT (197 aa)).

In terms of assembly, interacts with YWHAZ/14-3-3 protein zeta. Interacts with TRPV5 and TRPV6. As to expression, according to PubMed:10978534, testis-specific. According to PubMed:16371431, broadly expressed.

Its subcellular location is the cytoplasm. It is found in the membrane. In terms of biological role, may regulate epithelial calcium transport by inhibiting TRPV5 activity. The sequence is that of B box and SPRY domain-containing protein (Bspry) from Mus musculus (Mouse).